The primary structure comprises 768 residues: Vacuolar basic amino acid transporter 4 (768 aa).

Residues 1–252 lie on the Cytoplasmic side of the membrane; the sequence is MGKKDRQRKK…HDLTRRRIFS (252 aa). Positions 9 to 40 form a coiled coil; that stretch reads KKLREFAKLKNRQRNLRKSVQTLKNEVQREAK. The tract at residues 34-172 is disordered; it reads EVQREAKVPR…ELPVSSSNSF (139 aa). S62, S99, and S106 each carry phosphoserine. The span at 110-121 shows a compositional bias: basic and acidic residues; that stretch reads KPADKANEDDLK. Positions 132 to 159 are enriched in polar residues; sequence SALQSSITDFSDRSVSPLQSITSCNTPM. A phosphoserine mark is found at S160 and S192. The chain crosses the membrane as a helical span at residues 253 to 273; sequence SCMCTYLFFIAMDSSIILVIA. Over 274-282 the chain is Vacuolar; the sequence is SKIASEFHE. A helical membrane pass occupies residues 283–305; that stretch reads LWRLSLVISAYLLSNAIGQLVFL. The Cytoplasmic portion of the chain corresponds to 306 to 311; the sequence is KLSLIS. Residues 312–331 traverse the membrane as a helical segment; sequence SVKLLLCIAQFSFILGGYLS. The Vacuolar portion of the chain corresponds to 332-334; that stretch reads WSS. A helical transmembrane segment spans residues 335–357; it reads AHFWTFIFARCVTGFGGGSLIAL. Over 358-375 the chain is Cytoplasmic; sequence KSTIMNRFSQKNDSRYSL. A helical transmembrane segment spans residues 376-396; the sequence is SASMITFAMGVVIGPFMMNLF. Residues 397-406 are Vacuolar-facing; it reads DSSHGSGWRN. Residues 407-427 form a helical membrane-spanning segment; it reads AFLIPVPFCLVNASIMLADMY. At 428 to 447 the chain is on the cytoplasmic side; the sequence is SVKSTLYGRPTPTLWKRFKN. A helical membrane pass occupies residues 448-468; the sequence is TLLSPDLYEILTLTLFLLCFV. Residues 469 to 481 lie on the Vacuolar side of the membrane; sequence QVTSLDLTGLKNN. The N-linked (GlcNAc...) asparagine glycan is linked to N480. The chain crosses the membrane as a helical span at residues 482-502; the sequence is TMIQALLFSVIIVCGILFFLI. The Cytoplasmic segment spans residues 503–522; the sequence is ETSDTYMNSVISMSLQGDKR. The helical transmembrane segment at 523-543 threads the bilayer; it reads LIWTMIGISFCFAALMCIIPF. Over 544-562 the chain is Vacuolar; it reads GTTYFIIVLNLSTLQLAER. The N-linked (GlcNAc...) asparagine glycan is linked to N553. Residues 563-583 form a helical membrane-spanning segment; sequence LSPFFFSIVLGYFSVSYFWKS. The Cytoplasmic portion of the chain corresponds to 584–587; it reads KGQN. Residues 588–608 form a helical membrane-spanning segment; it reads FLLKFVLSGATLLLYVALMGV. The Vacuolar segment spans residues 609–617; it reads SLNLPVWKQ. A helical membrane pass occupies residues 618–638; that stretch reads YICLSLPFLGSSMILTLLSNL. Residues 639-653 lie on the Cytoplasmic side of the membrane; sequence YHEYHEQRKSPISGS. The chain crosses the membrane as a helical span at residues 654–674; the sequence is IVYCFGAVGGTVGISLGGYVF. Residues 675-734 lie on the Vacuolar side of the membrane; the sequence is HKTLIKLMHEKVMPFSKQGYLKKDLLKIIKHATESSDWVHESAPKFVFQTLIECYLQACR. A helical transmembrane segment spans residues 735 to 755; sequence NVFKLSTLFFTITVVAIFIFN. The Cytoplasmic portion of the chain corresponds to 756–768; sequence RIHCRSQNCLSLS.

Belongs to the major facilitator superfamily.

Its subcellular location is the vacuole membrane. Functionally, transporter required for vacuolar uptake of basic amino acids. In Saccharomyces cerevisiae (strain ATCC 204508 / S288c) (Baker's yeast), this protein is Vacuolar basic amino acid transporter 4 (VBA4).